We begin with the raw amino-acid sequence, 275 residues long: Large ribosomal subunit protein uL2c (275 aa).

The disordered stretch occupies residues 225–249; sequence PVDHPHGGGEGRAPIGRKKPTTPWG.

The protein belongs to the universal ribosomal protein uL2 family. Part of the 50S ribosomal subunit.

Its subcellular location is the plastid. In Cuscuta reflexa (Southern Asian dodder), this protein is Large ribosomal subunit protein uL2c (rpl2).